The sequence spans 316 residues: Protoheme IX farnesyltransferase (316 aa).

9 consecutive transmembrane segments (helical) span residues 32-52, 53-73, 98-118, 120-140, 153-173, 180-200, 226-246, 251-271, and 280-300; these read VMSL…THVN, PIIG…SGAL, VARE…VITL, FVAN…YVVI, IVIG…AVAG, LALF…LALV, ILLY…IGFA, GLLS…VYLA, and VAMR…AAIV.

This sequence belongs to the UbiA prenyltransferase family. Protoheme IX farnesyltransferase subfamily.

It is found in the cell inner membrane. It catalyses the reaction heme b + (2E,6E)-farnesyl diphosphate + H2O = Fe(II)-heme o + diphosphate. It functions in the pathway porphyrin-containing compound metabolism; heme O biosynthesis; heme O from protoheme: step 1/1. Its function is as follows. Converts heme B (protoheme IX) to heme O by substitution of the vinyl group on carbon 2 of heme B porphyrin ring with a hydroxyethyl farnesyl side group. This is Protoheme IX farnesyltransferase from Methylocella silvestris (strain DSM 15510 / CIP 108128 / LMG 27833 / NCIMB 13906 / BL2).